Here is a 604-residue protein sequence, read N- to C-terminus: Prostaglandin G/H synthase 2 (604 aa).

The N-terminal stretch at 1 to 17 (MLARALLLCVALALGHA) is a signal peptide. Residues 18 to 55 (ANPCCSNPCQNRGVCMSVGFDQYQCDCTRTGFYGENCS) form the EGF-like domain. Intrachain disulfides connect Cys-21/Cys-32, Cys-22/Cys-145, Cys-26/Cys-42, and Cys-44/Cys-54. An N-linked (GlcNAc...) asparagine glycan is attached at Asn-53. Position 106 (Arg-106) interacts with substrate. A glycan (N-linked (GlcNAc...) asparagine) is linked at Asn-130. His-193 serves as the catalytic Proton acceptor. A substrate-binding site is contributed by Tyr-341. Tyr-371 functions as the For cyclooxygenase activity in the catalytic mechanism. His-374 contributes to the heme b binding site. Asn-396 is a glycosylation site (N-linked (GlcNAc...) asparagine). Position 526 is an S-nitrosocysteine (Cys-526). Cys-555 and Cys-561 form a disulfide bridge. The N-linked (GlcNAc...) asparagine glycan is linked to Asn-580.

The protein belongs to the prostaglandin G/H synthase family. As to quaternary structure, homodimer. Requires heme b as cofactor. In terms of processing, S-nitrosylation by NOS2 (iNOS) activates enzyme activity. S-nitrosylation may take place on different Cys residues in addition to Cys-526.

It localises to the microsome membrane. It is found in the endoplasmic reticulum membrane. Its subcellular location is the nucleus inner membrane. The protein localises to the nucleus outer membrane. It carries out the reaction (5Z,8Z,11Z,14Z)-eicosatetraenoate + AH2 + 2 O2 = prostaglandin H2 + A + H2O. It catalyses the reaction (5Z,8Z,11Z,14Z)-eicosatetraenoate + 2 O2 = prostaglandin G2. The catalysed reaction is prostaglandin G2 + AH2 = prostaglandin H2 + A + H2O. The enzyme catalyses (5Z,8Z,11Z,14Z,17Z)-eicosapentaenoate + 2 O2 = prostaglandin G3. It carries out the reaction prostaglandin G3 + AH2 = prostaglandin H3 + A + H2O. It catalyses the reaction (8Z,11Z,14Z)-eicosatrienoate + 2 O2 = prostaglandin G1. The catalysed reaction is prostaglandin G1 + AH2 = prostaglandin H1 + A + H2O. The enzyme catalyses 2-(5Z,8Z,11Z,14Z)-eicosatetraenoyl-sn-glycero-3-phosphoethanolamine + 2 O2 = 2-(prostaglandin G2)-sn-glycero-3-phosphoethanolamine. It carries out the reaction 2-(prostaglandin G2)-sn-glycero-3-phosphoethanolamine + AH2 = 2-(prostaglandin H2)-sn-glycero-3-phosphoethanolamine + A + H2O. It catalyses the reaction 2-(5Z,8Z,11Z,14Z)-eicosatetraenoyl-sn-glycero-3-phosphocholine + 2 O2 = 2-(prostaglandin G2)-sn-glycero-3-phosphocholine. The catalysed reaction is 2-(prostaglandin G2)-sn-glycero-3-phosphocholine + AH2 = 2-(prostaglandin H2)-sn-glycero-3-phosphocholine + A + H2O. The enzyme catalyses (15S)-hydroperoxy-(5Z,8Z,11Z,13E)-eicosatetraenoate + AH2 = (15S)-hydroxy-(5Z,8Z,11Z,13E)-eicosatetraenoate + A + H2O. It carries out the reaction 2-(5Z,8Z,11Z,14Z)-eicosatetraenoyl-sn-glycero-3-phosphocholine + AH2 + O2 = 2-[(15S)-hydroxy-(5Z,8Z,11Z,13E)-eicosatetraenoyl]-sn-glycero-3-phosphocholine + A + H2O. It catalyses the reaction 2-(5Z,8Z,11Z,14Z)-eicosatetraenoyl-sn-glycero-3-phosphocholine + AH2 + O2 = 2-[(15R)-hydroxy-(5Z,8Z,11Z,13E)-eicosatetraenoyl]-sn-glycero-3-phosphocholine + A + H2O. The catalysed reaction is 2-(5Z,8Z,11Z,14Z)-eicosatetraenoyl-sn-glycero-3-phosphocholine + AH2 + O2 = 2-[(11R)-hydroxy-(5Z,8Z,12E,14Z)-eicosatetraenoyl]-sn-glycero-3-phosphocholine + A + H2O. The enzyme catalyses (9Z,12Z)-octadecadienoate + AH2 + O2 = 9-hydroxy-(10E,12Z)-octadecadienoate + A + H2O. It carries out the reaction (9Z,12Z)-octadecadienoate + AH2 + O2 = 13-hydroxy-(9Z,11E)-octadecadienoate + A + H2O. It catalyses the reaction (5Z,8Z,11Z,14Z)-eicosatetraenoate + AH2 + O2 = (15R)-hydroxy-(5Z,8Z,11Z,13E)-eicosatetraenoate + A + H2O. The catalysed reaction is (5Z,8Z,11Z,14Z)-eicosatetraenoate + AH2 + O2 = (11R)-hydroxy-(5Z,8Z,12E,14Z)-eicosatetraenoate + A + H2O. The enzyme catalyses (5Z,8Z,11Z,14Z,17Z)-eicosapentaenoate + AH2 + O2 = (11R)-hydroxy-(5Z,8Z,12E,14Z,17Z)-eicosapentaenoate + A + H2O. It carries out the reaction (5Z,8Z,11Z,14Z,17Z)-eicosapentaenoate + AH2 + O2 = (18S)-hydroxy-(5Z,8Z,11Z,14Z,16E)-eicosapentaenoate + A + H2O. It catalyses the reaction (5Z,8Z,11Z,14Z,17Z)-eicosapentaenoate + AH2 + O2 = (18R)-hydroxy-(5Z,8Z,11Z,14Z,16E)-eicosapentaenoate + A + H2O. The catalysed reaction is (5Z,8Z,11Z,14Z,17Z)-eicosapentaenoate + AH2 + O2 = (15R)-hydroxy-(5Z,8Z,11Z,13E,17Z)-eicosapentaenoate + A + H2O. The enzyme catalyses (5Z,8Z,11Z,14Z,17Z)-eicosapentaenoate + AH2 + O2 = (15S)-hydroxy-(5Z,8Z,11Z,13E,17Z)-eicosapentaenoate + A + H2O. It carries out the reaction (7Z,10Z,13Z,16Z,19Z)-docosapentaenoate + AH2 + O2 = 13R-hydroxy-(7Z,10Z,14E,16Z,19Z)-docosapentaenoate + A + H2O. It catalyses the reaction (4Z,7Z,10Z,13Z,16Z,19Z)-docosahexaenoate + AH2 + O2 = 13-hydroxy-(4Z,7Z,10Z,14E,16Z,19Z)-docosahexaenoate + A + H2O. The catalysed reaction is (5S)-hydroxy-(6E,8Z,11Z,14Z)-eicosatetraenoate + AH2 + O2 = (5S,15R)-dihydroxy-(6E,8Z,11Z,13E)-eicosatetraenoate + A + H2O. The enzyme catalyses (4Z,7Z,10Z,13Z,16Z,19Z)-docosahexaenoate + AH2 + O2 = 17R-hydroxy-(4Z,7Z,10Z,13Z,15E,19Z)-docosahexaenoate + A + H2O. It carries out the reaction (5S)-hydroxy-(6E,8Z,11Z,14Z)-eicosatetraenoate + AH2 + O2 = (5S,15S)-dihydroxy-(6E,8Z,11Z,13E)-eicosatetraenoate + A + H2O. It catalyses the reaction (5S)-hydroxy-(6E,8Z,11Z,14Z)-eicosatetraenoate + AH2 + O2 = (5S,11R)-dihydroxy-(6E,8Z,12E,14Z)-eicosatetraenoate + A + H2O. The catalysed reaction is 2-(5Z,8Z,11Z,14Z-eicosatetraenoyl)-glycerol + 2 O2 = 2-glyceryl-prostaglandin G2. The enzyme catalyses 2-glyceryl-prostaglandin G2 + AH2 = 2-glyceryl-prostaglandin H2 + A + H2O. It carries out the reaction (5Z,8Z,11Z,14Z)-eicosatetraenoate + O2 = (15R)-hydroperoxy-(5Z,8Z,11Z,13E)-eicosatetraenoate. It catalyses the reaction (5Z,8Z,11Z,14Z)-eicosatetraenoate + O2 = 11R-hydroperoxy-(5Z,8Z,12E,14Z)-eicosatetraenoate. The catalysed reaction is (9Z,12Z)-octadecadienoate + AH2 + O2 = (9R)-hydroxy-(10E,12Z)-octadecadienoate + A + H2O. The enzyme catalyses (9Z,12Z)-octadecadienoate + AH2 + O2 = (9S)-hydroxy-(10E,12Z)-octadecadienoate + A + H2O. It carries out the reaction (9Z,12Z)-octadecadienoate + AH2 + O2 = (13S)-hydroxy-(9Z,11E)-octadecadienoate + A + H2O. It catalyses the reaction (9Z,12Z)-octadecadienoate + AH2 + O2 = (13R)-hydroxy-(9Z,11E)-octadecadienoate + A + H2O. It participates in lipid metabolism; prostaglandin biosynthesis. In terms of biological role, dual cyclooxygenase and peroxidase in the biosynthesis pathway of prostanoids, a class of C20 oxylipins mainly derived from arachidonate ((5Z,8Z,11Z,14Z)-eicosatetraenoate, AA, C20:4(n-6)), with a particular role in the inflammatory response. The cyclooxygenase activity oxygenates AA to the hydroperoxy endoperoxide prostaglandin G2 (PGG2), and the peroxidase activity reduces PGG2 to the hydroxy endoperoxide prostaglandin H2 (PGH2), the precursor of all 2-series prostaglandins and thromboxanes. This complex transformation is initiated by abstraction of hydrogen at carbon 13 (with S-stereochemistry), followed by insertion of molecular O2 to form the endoperoxide bridge between carbon 9 and 11 that defines prostaglandins. The insertion of a second molecule of O2 (bis-oxygenase activity) yields a hydroperoxy group in PGG2 that is then reduced to PGH2 by two electrons. Similarly catalyzes successive cyclooxygenation and peroxidation of dihomo-gamma-linoleate (DGLA, C20:3(n-6)) and eicosapentaenoate (EPA, C20:5(n-3)) to corresponding PGH1 and PGH3, the precursors of 1- and 3-series prostaglandins. In an alternative pathway of prostanoid biosynthesis, converts 2-arachidonoyl lysophopholipids to prostanoid lysophopholipids, which are then hydrolyzed by intracellular phospholipases to release free prostanoids. Metabolizes 2-arachidonoyl glycerol yielding the glyceryl ester of PGH2, a process that can contribute to pain response. Generates lipid mediators from n-3 and n-6 polyunsaturated fatty acids (PUFAs) via a lipoxygenase-type mechanism. Oxygenates PUFAs to hydroperoxy compounds and then reduces them to corresponding alcohols. Plays a role in the generation of resolution phase interaction products (resolvins) during both sterile and infectious inflammation. Metabolizes docosahexaenoate (DHA, C22:6(n-3)) to 17R-HDHA, a precursor of the D-series resolvins (RvDs). As a component of the biosynthetic pathway of E-series resolvins (RvEs), converts eicosapentaenoate (EPA, C20:5(n-3)) primarily to 18S-HEPE that is further metabolized by ALOX5 and LTA4H to generate 18S-RvE1 and 18S-RvE2. In vascular endothelial cells, converts docosapentaenoate (DPA, C22:5(n-3)) to 13R-HDPA, a precursor for 13-series resolvins (RvTs) shown to activate macrophage phagocytosis during bacterial infection. In activated leukocytes, contributes to oxygenation of hydroxyeicosatetraenoates (HETE) to diHETES (5,15-diHETE and 5,11-diHETE). Can also use linoleate (LA, (9Z,12Z)-octadecadienoate, C18:2(n-6)) as substrate and produce hydroxyoctadecadienoates (HODEs) in a regio- and stereospecific manner, being (9R)-HODE ((9R)-hydroxy-(10E,12Z)-octadecadienoate) and (13S)-HODE ((13S)-hydroxy-(9Z,11E)-octadecadienoate) its major products. During neuroinflammation, plays a role in neuronal secretion of specialized preresolving mediators (SPMs) 15R-lipoxin A4 that regulates phagocytic microglia. This Equus caballus (Horse) protein is Prostaglandin G/H synthase 2 (PTGS2).